A 302-amino-acid chain; its full sequence is AT-hook motif nuclear-localized protein 29 (302 aa).

Residues 1–95 (MDGGYDQSGG…KPPVIVTRDS (95 aa)) form a disordered region. A compositionally biased stretch (pro residues) spans 32–44 (QLHPLPQPQPQPQ). The segment at residues 72–84 (KRPRGRPPGSKNK) is a DNA-binding region (a.T hook). Residues 96–241 (PNVLRSHVLE…DEGGEGGEGG (146 aa)) enclose the PPC domain. Residues 164-169 (GRFEIL) form a required for the binding to non-AHL interactors region. The disordered stretch occupies residues 229–279 (PLEDEGGEGGEGGEVGEGGGGEGGPPPATSSSPPSGAGQGQLRGNMSGYDQ). The segment covering 237–251 (GGEGGEVGEGGGGEG) has biased composition (gly residues).

In terms of assembly, homodimer. Interacts with AHL5, AHL12, AHL25, AHL27, TCP4, TCP13 and EF114. Expressed in the hypocotyl and the vascular tissue of seedling.

The protein resides in the nucleus. In terms of biological role, transcription factor that specifically binds AT-rich DNA sequences related to the nuclear matrix attachment regions (MARs). Acts redundantly with AHL18, AHL22 and AHL27 in the regulation of flowering and regulation of the hypocotyl elongation. Acts redundantly with AHL27/ESC to modulate hypocotyl growth inhibition in response to light. The protein is AT-hook motif nuclear-localized protein 29 of Arabidopsis thaliana (Mouse-ear cress).